Consider the following 131-residue polypeptide: Profilin-8 (131 aa).

Cys-13 and Cys-115 form a disulfide bridge. The Involved in PIP2 interaction motif lies at 81–97; the sequence is AVIRGKKGAGGITIKKT. Residue Thr-111 is modified to Phosphothreonine.

It belongs to the profilin family. As to quaternary structure, occurs in many kinds of cells as a complex with monomeric actin in a 1:1 ratio. In terms of processing, phosphorylated by MAP kinases.

The protein localises to the cytoplasm. Its subcellular location is the cytoskeleton. Functionally, binds to actin and affects the structure of the cytoskeleton. At high concentrations, profilin prevents the polymerization of actin, whereas it enhances it at low concentrations. This Olea europaea (Common olive) protein is Profilin-8.